Here is a 748-residue protein sequence, read N- to C-terminus: E3 ubiquitin-protein ligase SMURF2 (748 aa).

One can recognise a C2 domain in the interval Met1–Lys119. A Glycyl lysine isopeptide (Lys-Gly) (interchain with G-Cter in ubiquitin) cross-link involves residue Lys119. WW domains lie at Asn157–Arg190, Pro251–Val284, and Gly297–Leu330. Residues Arg414–Glu748 form the HECT domain. Residue Cys716 is the Glycyl thioester intermediate of the active site.

As to quaternary structure, interacts (via WW domains) with SMAD1. Interacts (via WW domains) with SMAD2 (via PY-motif). Interacts (via WW domains) with SMAD3 (via PY-motif). Interacts with SMAD6. Interacts with SMAD7 (via PY-motif) and TGFBR1; SMAD7 recruits SMURF2 to the TGF-beta receptor and regulates its degradation. Does not interact with SMAD4; SMAD4 lacks a PY-motif. Interacts with AIMP1. Interacts with NDFIP1 and NDFIP2; this interaction activates the E3 ubiquitin-protein ligase. Interacts with TTC3. Auto-ubiquitinated and ubiquitinated in the presence of RNF11 and UBE2D1. Ubiquitinated by the SCF(FBXL15) complex and TTC3, leading to its degradation by the proteasome. 'Lys-48'-linked polyubiquitination mediated by TRAF4 at Lys-119 leads to SMURF2 proteasomal degradation.

It localises to the nucleus. The protein localises to the cytoplasm. It is found in the cell membrane. The protein resides in the membrane raft. The catalysed reaction is S-ubiquitinyl-[E2 ubiquitin-conjugating enzyme]-L-cysteine + [acceptor protein]-L-lysine = [E2 ubiquitin-conjugating enzyme]-L-cysteine + N(6)-ubiquitinyl-[acceptor protein]-L-lysine.. It functions in the pathway protein modification; protein ubiquitination. With respect to regulation, activated by NDFIP1- and NDFIP2-binding. Its function is as follows. E3 ubiquitin-protein ligase which accepts ubiquitin from an E2 ubiquitin-conjugating enzyme in the form of a thioester and then directly transfers the ubiquitin to targeted substrates. Interacts with SMAD7 to trigger SMAD7-mediated transforming growth factor beta/TGF-beta receptor ubiquitin-dependent degradation, thereby down-regulating TGF-beta signaling. In addition, interaction with SMAD7 activates autocatalytic degradation, which is prevented by interaction with AIMP1. Also forms a stable complex with TGF-beta receptor-mediated phosphorylated SMAD1, SMAD2 and SMAD3, and targets SMAD1 and SMAD2 for ubiquitination and proteasome-mediated degradation. SMAD2 may recruit substrates, such as SNON, for ubiquitin-dependent degradation. Negatively regulates TGFB1-induced epithelial-mesenchymal transition and myofibroblast differentiation. The protein is E3 ubiquitin-protein ligase SMURF2 of Mus musculus (Mouse).